A 135-amino-acid chain; its full sequence is Global transcriptional regulator Spx 2 (135 aa).

Cysteine 10 is an active-site residue.

It belongs to the ArsC family. Spx subfamily. Interacts with the C-terminal domain of the alpha subunit of the RNAP.

Its subcellular location is the cytoplasm. Functionally, global transcriptional regulator that plays a key role in stress response and exerts either positive or negative regulation of genes. Acts by interacting with the C-terminal domain of the alpha subunit of the RNA polymerase (RNAP). This interaction can enhance binding of RNAP to the promoter region of target genes and stimulate their transcription, or block interaction of RNAP with activator. This Oceanobacillus iheyensis (strain DSM 14371 / CIP 107618 / JCM 11309 / KCTC 3954 / HTE831) protein is Global transcriptional regulator Spx 2.